Reading from the N-terminus, the 282-residue chain is Putative quercetin 2,3-dioxygenase VC_A0969 (282 aa).

A disordered region spans residues M1–G21. H59, H61, H103, and E105 together coordinate a divalent metal cation.

Belongs to the pirin family. The cofactor is a divalent metal cation.

It carries out the reaction quercetin + O2 = 2-(3,4-dihydroxybenzoyloxy)-4,6-dihydroxybenzoate + CO. Its pathway is flavonoid metabolism; quercetin degradation. Functionally, putative quercetin 2,3-dioxygenase. This Vibrio cholerae serotype O1 (strain ATCC 39315 / El Tor Inaba N16961) protein is Putative quercetin 2,3-dioxygenase VC_A0969.